Here is a 274-residue protein sequence, read N- to C-terminus: S-adenosylmethionine decarboxylase proenzyme (274 aa).

S119 (schiff-base intermediate with substrate; via pyruvic acid) is an active-site residue. S119 bears the Pyruvic acid (Ser); by autocatalysis mark. The Proton acceptor; for processing activity role is filled by H124. C147 acts as the Proton donor; for catalytic activity in catalysis.

The protein belongs to the prokaryotic AdoMetDC family. Type 2 subfamily. Heterooctamer of four alpha and four beta chains arranged as a tetramer of alpha/beta heterodimers. The cofactor is pyruvate. Is synthesized initially as an inactive proenzyme. Formation of the active enzyme involves a self-maturation process in which the active site pyruvoyl group is generated from an internal serine residue via an autocatalytic post-translational modification. Two non-identical subunits are generated from the proenzyme in this reaction, and the pyruvate is formed at the N-terminus of the alpha chain, which is derived from the carboxyl end of the proenzyme. The post-translation cleavage follows an unusual pathway, termed non-hydrolytic serinolysis, in which the side chain hydroxyl group of the serine supplies its oxygen atom to form the C-terminus of the beta chain, while the remainder of the serine residue undergoes an oxidative deamination to produce ammonia and the pyruvoyl group blocking the N-terminus of the alpha chain.

The enzyme catalyses S-adenosyl-L-methionine + H(+) = S-adenosyl 3-(methylsulfanyl)propylamine + CO2. It functions in the pathway amine and polyamine biosynthesis; S-adenosylmethioninamine biosynthesis; S-adenosylmethioninamine from S-adenosyl-L-methionine: step 1/1. In terms of biological role, catalyzes the decarboxylation of S-adenosylmethionine to S-adenosylmethioninamine (dcAdoMet), the propylamine donor required for the synthesis of the polyamines spermine and spermidine from the diamine putrescine. The polypeptide is S-adenosylmethionine decarboxylase proenzyme (Clostridium acetobutylicum (strain ATCC 824 / DSM 792 / JCM 1419 / IAM 19013 / LMG 5710 / NBRC 13948 / NRRL B-527 / VKM B-1787 / 2291 / W)).